Consider the following 357-residue polypeptide: Chorismate synthase (357 aa).

Position 47 (arginine 47) interacts with NADP(+). Residues 123 to 125, glycine 281, 296 to 300, and arginine 324 each bind FMN; these read RAS and KPTSS.

This sequence belongs to the chorismate synthase family. In terms of assembly, homotetramer. FMNH2 is required as a cofactor.

The catalysed reaction is 5-O-(1-carboxyvinyl)-3-phosphoshikimate = chorismate + phosphate. Its pathway is metabolic intermediate biosynthesis; chorismate biosynthesis; chorismate from D-erythrose 4-phosphate and phosphoenolpyruvate: step 7/7. In terms of biological role, catalyzes the anti-1,4-elimination of the C-3 phosphate and the C-6 proR hydrogen from 5-enolpyruvylshikimate-3-phosphate (EPSP) to yield chorismate, which is the branch point compound that serves as the starting substrate for the three terminal pathways of aromatic amino acid biosynthesis. This reaction introduces a second double bond into the aromatic ring system. The sequence is that of Chorismate synthase from Chlamydia trachomatis serovar L2 (strain ATCC VR-902B / DSM 19102 / 434/Bu).